Reading from the N-terminus, the 338-residue chain is Mitochondrial genome maintenance exonuclease 1 (338 aa).

The transit peptide at 1–64 (MKLPLTFCRL…RSVLSRGPAQ (64 aa)) directs the protein to the mitochondrion. Residues D235, D248, and K250 contribute to the active site.

It belongs to the MGME1 family.

The protein resides in the mitochondrion. Its function is as follows. Metal-dependent single-stranded DNA (ssDNA) exonuclease involved in mitochondrial genome maintenance. Has preference for 5'-3' exonuclease activity but is also capable of endonuclease activity on linear substrates. Necessary for maintenance of proper 7S DNA levels. Probably involved in mitochondrial DNA (mtDNA) repair, possibly via the processing of displaced DNA containing Okazaki fragments during RNA-primed DNA synthesis on the lagging strand or via processing of DNA flaps during long-patch base excision repair. Specifically binds 5-hydroxymethylcytosine (5hmC)-containing DNA in stem cells. The chain is Mitochondrial genome maintenance exonuclease 1 (Mgme1) from Mus musculus (Mouse).